Consider the following 691-residue polypeptide: Elongation factor G (691 aa).

Residues 8-282 enclose the tr-type G domain; it reads ERVRNIGIAA…AVVDYLPAPV (275 aa). GTP contacts are provided by residues 17 to 24, 81 to 85, and 135 to 138; these read AHIDAGKT, DTPGH, and NKMD.

This sequence belongs to the TRAFAC class translation factor GTPase superfamily. Classic translation factor GTPase family. EF-G/EF-2 subfamily.

It is found in the cytoplasm. Functionally, catalyzes the GTP-dependent ribosomal translocation step during translation elongation. During this step, the ribosome changes from the pre-translocational (PRE) to the post-translocational (POST) state as the newly formed A-site-bound peptidyl-tRNA and P-site-bound deacylated tRNA move to the P and E sites, respectively. Catalyzes the coordinated movement of the two tRNA molecules, the mRNA and conformational changes in the ribosome. The polypeptide is Elongation factor G (Prochlorococcus marinus (strain MIT 9211)).